Consider the following 208-residue polypeptide: N-(5'-phosphoribosyl)anthranilate isomerase (208 aa).

The protein belongs to the TrpF family.

It catalyses the reaction N-(5-phospho-beta-D-ribosyl)anthranilate = 1-(2-carboxyphenylamino)-1-deoxy-D-ribulose 5-phosphate. It functions in the pathway amino-acid biosynthesis; L-tryptophan biosynthesis; L-tryptophan from chorismate: step 3/5. This chain is N-(5'-phosphoribosyl)anthranilate isomerase, found in Chlamydia trachomatis serovar L2 (strain ATCC VR-902B / DSM 19102 / 434/Bu).